The chain runs to 247 residues: Triosephosphate isomerase (247 aa).

Substrate contacts are provided by Asn10 and Lys12. His94 (electrophile) is an active-site residue. Glu164 serves as the catalytic Proton acceptor.

This sequence belongs to the triosephosphate isomerase family. As to quaternary structure, homodimer.

It carries out the reaction D-glyceraldehyde 3-phosphate = dihydroxyacetone phosphate. It participates in carbohydrate biosynthesis; gluconeogenesis. The protein operates within carbohydrate degradation; glycolysis; D-glyceraldehyde 3-phosphate from glycerone phosphate: step 1/1. The protein is Triosephosphate isomerase (Tpi) of Drosophila melanogaster (Fruit fly).